We begin with the raw amino-acid sequence, 167 residues long: Pathogenesis-related protein PR-1 type (167 aa).

The signal sequence occupies residues M1–Q29. Positions V36–Y155 constitute an SCP domain. Cystine bridges form between C72–C144, C117–C123, and C139–C153.

It belongs to the CRISP family.

Functionally, probably involved in the defense reaction of plants against pathogens. This Sambucus nigra (European elder) protein is Pathogenesis-related protein PR-1 type.